We begin with the raw amino-acid sequence, 833 residues long: Leucine--tRNA ligase (833 aa).

Positions 41–52 match the 'HIGH' region motif; sequence PYPSGAGLHVGH. The 'KMSKS' region motif lies at 610-614; sequence KMSKS. An ATP-binding site is contributed by lysine 613.

The protein belongs to the class-I aminoacyl-tRNA synthetase family.

It localises to the cytoplasm. It catalyses the reaction tRNA(Leu) + L-leucine + ATP = L-leucyl-tRNA(Leu) + AMP + diphosphate. This chain is Leucine--tRNA ligase, found in Streptococcus pneumoniae serotype 19F (strain G54).